Reading from the N-terminus, the 284-residue chain is 4-diphosphocytidyl-2-C-methyl-D-erythritol kinase (284 aa).

The active site involves Lys14. 98–108 (PMGGGLGGGSS) contributes to the ATP binding site. The active site involves Asp140.

It belongs to the GHMP kinase family. IspE subfamily.

It carries out the reaction 4-CDP-2-C-methyl-D-erythritol + ATP = 4-CDP-2-C-methyl-D-erythritol 2-phosphate + ADP + H(+). It participates in isoprenoid biosynthesis; isopentenyl diphosphate biosynthesis via DXP pathway; isopentenyl diphosphate from 1-deoxy-D-xylulose 5-phosphate: step 3/6. Catalyzes the phosphorylation of the position 2 hydroxy group of 4-diphosphocytidyl-2C-methyl-D-erythritol. This chain is 4-diphosphocytidyl-2-C-methyl-D-erythritol kinase, found in Shewanella piezotolerans (strain WP3 / JCM 13877).